The sequence spans 81 residues: YcgL domain-containing protein Tgr7_3126 (81 aa).

One can recognise a YcgL domain in the interval 1–81; it reads MQVYVYKSRR…QMPPQNERPL (81 aa).

In Thioalkalivibrio sulfidiphilus (strain HL-EbGR7), this protein is YcgL domain-containing protein Tgr7_3126.